A 131-amino-acid chain; its full sequence is uncharacterized protein (131 aa).

Positions 14-130 (FLLIYSSLEV…RRLPASFLST (117 aa)) constitute an MSP domain.

This is an uncharacterized protein from Caenorhabditis elegans.